The sequence spans 502 residues: Xylulose kinase (502 aa).

Substrate is bound at residue 82 to 83; the sequence is MH. The Proton acceptor role is filled by D240.

This sequence belongs to the FGGY kinase family.

It carries out the reaction D-xylulose + ATP = D-xylulose 5-phosphate + ADP + H(+). Its function is as follows. Catalyzes the phosphorylation of D-xylulose to D-xylulose 5-phosphate. This is Xylulose kinase from Levilactobacillus brevis (Lactobacillus brevis).